An 885-amino-acid chain; its full sequence is Alanine--tRNA ligase (885 aa).

Positions 426–444 are enriched in basic and acidic residues; sequence QEQKTRARQDRREKQRGGA. Residues 426-445 form a disordered region; the sequence is QEQKTRARQDRREKQRGGAE. The Zn(2+) site is built by histidine 568, histidine 572, cysteine 671, and histidine 675.

Belongs to the class-II aminoacyl-tRNA synthetase family. It depends on Zn(2+) as a cofactor.

It localises to the cytoplasm. It carries out the reaction tRNA(Ala) + L-alanine + ATP = L-alanyl-tRNA(Ala) + AMP + diphosphate. Catalyzes the attachment of alanine to tRNA(Ala) in a two-step reaction: alanine is first activated by ATP to form Ala-AMP and then transferred to the acceptor end of tRNA(Ala). Also edits incorrectly charged Ser-tRNA(Ala) and Gly-tRNA(Ala) via its editing domain. In Chlorobium phaeovibrioides (strain DSM 265 / 1930) (Prosthecochloris vibrioformis (strain DSM 265)), this protein is Alanine--tRNA ligase.